Reading from the N-terminus, the 294-residue chain is MDEYKKAEILIEALPYICKFHDQKFVIKYGGHAMVNEQAKNWIAKDMVLLKYVGINPIIVHGGGPEINRAMEKMGKVPEFIHGLRVTDEETLEIVKMVLIGKINGDIVSKLEQYGGKSVGLSGKSGQLIKARKKIQYLIRDNEKIEVDLGMVGEVERVDTKLVDILVEKKYIPVISPIGVDEQNKDLNLNADIAAGDIAGAMNAEKLIMVTDVDGIMDDINDPKTLHRKLTISQIEKMIEKGIITGGMIPKIEACINALNKGVQSVHIVNGKIPHAVLLEIFTEEGIGTMILKD.

Residues 63 to 64, Arg-85, and Asn-188 contribute to the substrate site; that span reads GG.

Belongs to the acetylglutamate kinase family. ArgB subfamily.

The protein resides in the cytoplasm. The enzyme catalyses N-acetyl-L-glutamate + ATP = N-acetyl-L-glutamyl 5-phosphate + ADP. It functions in the pathway amino-acid biosynthesis; L-arginine biosynthesis; N(2)-acetyl-L-ornithine from L-glutamate: step 2/4. Functionally, catalyzes the ATP-dependent phosphorylation of N-acetyl-L-glutamate. The protein is Acetylglutamate kinase of Methanococcus vannielii (strain ATCC 35089 / DSM 1224 / JCM 13029 / OCM 148 / SB).